The sequence spans 282 residues: NADPH-dependent 7-cyano-7-deazaguanine reductase (282 aa).

A substrate-binding site is contributed by 88 to 90 (IES). Residue 90–91 (SK) coordinates NADPH. C190 functions as the Thioimide intermediate in the catalytic mechanism. The Proton donor role is filled by D197. Residue 229–230 (HE) participates in substrate binding. An NADPH-binding site is contributed by 258-259 (RG).

Belongs to the GTP cyclohydrolase I family. QueF type 2 subfamily. Homodimer.

It is found in the cytoplasm. The catalysed reaction is 7-aminomethyl-7-carbaguanine + 2 NADP(+) = 7-cyano-7-deazaguanine + 2 NADPH + 3 H(+). It participates in tRNA modification; tRNA-queuosine biosynthesis. Functionally, catalyzes the NADPH-dependent reduction of 7-cyano-7-deazaguanine (preQ0) to 7-aminomethyl-7-deazaguanine (preQ1). In Escherichia coli (strain K12 / MC4100 / BW2952), this protein is NADPH-dependent 7-cyano-7-deazaguanine reductase.